Reading from the N-terminus, the 150-residue chain is MEKRKDTKTTLAKASDDRNKAWYVVNAEGKTLGRLSSEVAKILRGKHKVTFTPHVAMGDGVIVINAEKVRLTGAKRAQKVYHYYTGFISGMREVPFENMIARKPAYVIEHAVKGMLPKTKLGRRQMKSLRVLKGSSYAQYEAIKPIVLDA.

It belongs to the universal ribosomal protein uL13 family. As to quaternary structure, part of the 50S ribosomal subunit.

Its function is as follows. This protein is one of the early assembly proteins of the 50S ribosomal subunit, although it is not seen to bind rRNA by itself. It is important during the early stages of 50S assembly. The sequence is that of Large ribosomal subunit protein uL13 from Chlamydia trachomatis serovar A (strain ATCC VR-571B / DSM 19440 / HAR-13).